The primary structure comprises 182 residues: Glutamyl-tRNA(Gln) amidotransferase subunit F, mitochondrial (182 aa).

The protein belongs to the GatF family. In terms of assembly, subunit of the heterotrimeric GatFAB amidotransferase (AdT) complex, composed of A, B and F subunits.

It is found in the mitochondrion inner membrane. The catalysed reaction is L-glutamyl-tRNA(Gln) + L-glutamine + ATP + H2O = L-glutaminyl-tRNA(Gln) + L-glutamate + ADP + phosphate + H(+). Its function is as follows. Allows the formation of correctly charged Gln-tRNA(Gln) through the transamidation of misacylated Glu-tRNA(Gln) in the mitochondria. The reaction takes place in the presence of glutamine and ATP through an activated gamma-phospho-Glu-tRNA(Gln). Required for proper protein synthesis within the mitochondrion. In Candida tropicalis (strain ATCC MYA-3404 / T1) (Yeast), this protein is Glutamyl-tRNA(Gln) amidotransferase subunit F, mitochondrial.